We begin with the raw amino-acid sequence, 373 residues long: Chloroperoxidase (373 aa).

The N-terminal stretch at 1–20 (MFSKVLPFVGAVAALPHSVR) is a signal peptide. Pyrrolidone carboxylic acid is present on glutamine 21. N-linked (GlcNAc...) asparagine glycosylation is present at asparagine 33. Residue cysteine 50 participates in heme binding. A disulfide bond links cysteine 100 and cysteine 108. Asparagine 114 carries an N-linked (GlcNAc...) asparagine glycan. Glutamate 125, histidine 126, and serine 129 together coordinate Mn(2+). Glutamate 204 is an active-site residue. Residue asparagine 237 is glycosylated (N-linked (GlcNAc...) asparagine). A glycan (O-linked (Man) threonine) is linked at threonine 259. Serine 260, serine 262, serine 263, and serine 269 each carry an O-linked (Man) serine glycan. Threonine 271 carries an O-linked (Man) threonine glycan. Serine 272 carries an O-linked (Man) serine glycan. The O-linked (Man) threonine glycan is linked to threonine 273. 3 O-linked (Man...) threonine glycosylation sites follow: threonine 296, threonine 304, and threonine 314. A propeptide spanning residues 322-373 (EAAPAATTSMAVFKNPYLEAIGTQDIKNQQAYVSSKAAAMASAMAANKARNL) is cleaved from the precursor.

This sequence belongs to the chloroperoxidase family. Heme b is required as a cofactor. Requires Mn(2+) as cofactor. In terms of processing, N- and O-glycosylated.

It carries out the reaction RH + Cl(-) + H2O2 = RCl + 2 H2O.. Catalyzes peroxidative halogenations involved in the biosynthesis of clardariomycin (2,2-dichloro-1,3-cyclo-pentenedione). The enzyme also has potent catalase activity and in the absence of halide ion, acts as a peroxidase similar to plant peroxidases. The protein is Chloroperoxidase (CPO) of Leptoxyphium fumago (Caldariomyces fumago).